Consider the following 204-residue polypeptide: Large ribosomal subunit protein eL15B (204 aa).

Residues 165–185 (TATGKKSRGINKGHKFNNTKA) are disordered. Residues 169–185 (KKSRGINKGHKFNNTKA) show a composition bias toward basic residues.

The protein belongs to the eukaryotic ribosomal protein eL15 family. As to quaternary structure, component of the large ribosomal subunit (LSU). Mature yeast ribosomes consist of a small (40S) and a large (60S) subunit. The 40S small subunit contains 1 molecule of ribosomal RNA (18S rRNA) and 33 different proteins (encoded by 57 genes). The large 60S subunit contains 3 rRNA molecules (25S, 5.8S and 5S rRNA) and 46 different proteins (encoded by 81 genes).

It localises to the cytoplasm. Component of the ribosome, a large ribonucleoprotein complex responsible for the synthesis of proteins in the cell. The small ribosomal subunit (SSU) binds messenger RNAs (mRNAs) and translates the encoded message by selecting cognate aminoacyl-transfer RNA (tRNA) molecules. The large subunit (LSU) contains the ribosomal catalytic site termed the peptidyl transferase center (PTC), which catalyzes the formation of peptide bonds, thereby polymerizing the amino acids delivered by tRNAs into a polypeptide chain. The nascent polypeptides leave the ribosome through a tunnel in the LSU and interact with protein factors that function in enzymatic processing, targeting, and the membrane insertion of nascent chains at the exit of the ribosomal tunnel. In Saccharomyces cerevisiae (strain ATCC 204508 / S288c) (Baker's yeast), this protein is Large ribosomal subunit protein eL15B.